We begin with the raw amino-acid sequence, 436 residues long: UDP-N-acetylmuramate--L-alanine ligase (436 aa).

Position 111 to 117 (111 to 117 (GTHGKTS)) interacts with ATP.

This sequence belongs to the MurCDEF family.

The protein localises to the cytoplasm. It catalyses the reaction UDP-N-acetyl-alpha-D-muramate + L-alanine + ATP = UDP-N-acetyl-alpha-D-muramoyl-L-alanine + ADP + phosphate + H(+). It participates in cell wall biogenesis; peptidoglycan biosynthesis. In terms of biological role, cell wall formation. This Pediococcus pentosaceus (strain ATCC 25745 / CCUG 21536 / LMG 10740 / 183-1w) protein is UDP-N-acetylmuramate--L-alanine ligase.